A 465-amino-acid polypeptide reads, in one-letter code: 23S rRNA (uracil(1939)-C(5))-methyltransferase RlmD (465 aa).

Residues 1 to 22 (MSEAVPTSARKSKNAPVAPGPA) are disordered. The TRAM domain occupies 16–80 (PVAPGPAPVL…PSYEQATVVD (65 aa)). [4Fe-4S] cluster contacts are provided by Cys-93, Cys-99, Cys-102, and Cys-181. The S-adenosyl-L-methionine site is built by Gln-289, Phe-318, Asn-323, Glu-339, Asn-367, and Asp-388. Cys-421 functions as the Nucleophile in the catalytic mechanism.

This sequence belongs to the class I-like SAM-binding methyltransferase superfamily. RNA M5U methyltransferase family. RlmD subfamily.

It catalyses the reaction uridine(1939) in 23S rRNA + S-adenosyl-L-methionine = 5-methyluridine(1939) in 23S rRNA + S-adenosyl-L-homocysteine + H(+). Its function is as follows. Catalyzes the formation of 5-methyl-uridine at position 1939 (m5U1939) in 23S rRNA. This Burkholderia cenocepacia (strain HI2424) protein is 23S rRNA (uracil(1939)-C(5))-methyltransferase RlmD.